An 878-amino-acid polypeptide reads, in one-letter code: Alanine--tRNA ligase (878 aa).

The Zn(2+) site is built by histidine 562, histidine 566, cysteine 670, and histidine 674.

It belongs to the class-II aminoacyl-tRNA synthetase family. Zn(2+) serves as cofactor.

The protein resides in the cytoplasm. The catalysed reaction is tRNA(Ala) + L-alanine + ATP = L-alanyl-tRNA(Ala) + AMP + diphosphate. Catalyzes the attachment of alanine to tRNA(Ala) in a two-step reaction: alanine is first activated by ATP to form Ala-AMP and then transferred to the acceptor end of tRNA(Ala). Also edits incorrectly charged Ser-tRNA(Ala) and Gly-tRNA(Ala) via its editing domain. This is Alanine--tRNA ligase from Acinetobacter baylyi (strain ATCC 33305 / BD413 / ADP1).